Reading from the N-terminus, the 116-residue chain is DNA-binding protein Tpen_0471 (116 aa).

It belongs to the PDCD5 family.

This is DNA-binding protein Tpen_0471 from Thermofilum pendens (strain DSM 2475 / Hrk 5).